Consider the following 155-residue polypeptide: Small ribosomal subunit protein uS7 (155 aa).

This sequence belongs to the universal ribosomal protein uS7 family. Part of the 30S ribosomal subunit. Contacts proteins S9 and S11.

Its function is as follows. One of the primary rRNA binding proteins, it binds directly to 16S rRNA where it nucleates assembly of the head domain of the 30S subunit. Is located at the subunit interface close to the decoding center, probably blocks exit of the E-site tRNA. This Mycoplasma pneumoniae (strain ATCC 29342 / M129 / Subtype 1) (Mycoplasmoides pneumoniae) protein is Small ribosomal subunit protein uS7.